The chain runs to 138 residues: Cystatin-11 (138 aa).

The signal sequence occupies residues 1–26; that stretch reads MMAEPWQALQLLLAILLTLMALPYQA. Cystine bridges form between Cys94-Cys102 and Cys115-Cys135. The N-linked (GlcNAc...) asparagine glycan is linked to Asn132.

This sequence belongs to the cystatin family. Detected in the epithelium and lumen of the epididymis, and in sperm (at protein level).

It localises to the secreted. Functionally, has antibacterial activity against the Gram-negative bacteria E.coli. May play a role in sperm maturation and fertilization. This is Cystatin-11 (CST11) from Homo sapiens (Human).